The chain runs to 332 residues: DNA-directed RNA polymerase subunit alpha (332 aa).

The tract at residues 1-234 (MTVTANQVLR…DQLSVFGDFT (234 aa)) is alpha N-terminal domain (alpha-NTD). Residues 248-332 (VDPVLLRPID…AGVASHGMLG (85 aa)) form an alpha C-terminal domain (alpha-CTD) region.

It belongs to the RNA polymerase alpha chain family. Homodimer. The RNAP catalytic core consists of 2 alpha, 1 beta, 1 beta' and 1 omega subunit. When a sigma factor is associated with the core the holoenzyme is formed, which can initiate transcription.

The enzyme catalyses RNA(n) + a ribonucleoside 5'-triphosphate = RNA(n+1) + diphosphate. DNA-dependent RNA polymerase catalyzes the transcription of DNA into RNA using the four ribonucleoside triphosphates as substrates. In Stenotrophomonas maltophilia (strain R551-3), this protein is DNA-directed RNA polymerase subunit alpha.